The following is a 582-amino-acid chain: ABC transporter-like protein ECU11_1340 (582 aa).

Residues 15-257 (VPNQNLSSNE…LGTKGIHNDG (243 aa)) enclose the ABC transporter domain. Residue 47–54 (GTSGSGKT) coordinates ATP. Residues 316–519 (YVSFQMAIRQ…EIDAFISNFF (204 aa)) form the ABC transmembrane type-2 domain. 6 consecutive transmembrane segments (helical) span residues 335 to 355 (ILYS…GKYI), 359 to 378 (FSIA…YVMN), 412 to 432 (TLVS…FGLI), 436 to 456 (HAFL…SMLF), 482 to 502 (GALL…SVIP), and 551 to 571 (SFLR…SSIL).

The protein belongs to the ABC transporter superfamily.

It is found in the membrane. The chain is ABC transporter-like protein ECU11_1340 from Encephalitozoon cuniculi (strain GB-M1) (Microsporidian parasite).